A 225-amino-acid polypeptide reads, in one-letter code: Insulin-induced gene 2 protein (225 aa).

At 1 to 28 (MAENDAKPTLPKKSGPYISSVTSHGMNL) the chain is on the cytoplasmic side. A helical transmembrane segment spans residues 29-51 (VIRGIVLFFIGVFLALVLNLLQI). The Lumenal portion of the chain corresponds to 52 to 70 (QRNVTLFPPDVITSIFSSA). Residues 71–88 (WWVPPCCGTASAVIGLLY) form a helical membrane-spanning segment. Topologically, residues 89–103 (PCMDRHLGEPHKFKR) are cytoplasmic. Residues 104–126 (EWSSVMRCVAVFVGINHASAKVD) traverse the membrane as a helical segment. Over 127-129 (FAN) the chain is Lumenal. A helical membrane pass occupies residues 130–148 (NIQLSLTLAALSIGLWWTF). Residues 149 to 153 (DRSRS) lie on the Cytoplasmic side of the membrane. Residues 154–175 (GFGLGVGIAFLATLVSQLLVYN) traverse the membrane as a helical segment. At 176–189 (GVYQYTSPDFLYVR) the chain is on the lumenal side. Residues 190–207 (SWLPCIFFAGGITMGNIG) form a helical membrane-spanning segment. Topologically, residues 208–225 (RQLAMYECKVIAEKSHED) are cytoplasmic. The KxHxx motif lies at 219-225 (AEKSHED).

This sequence belongs to the INSIG family. Interacts with SCAP; interaction is direct and only takes place in the presence of sterols; it prevents interaction between SCAP and the coat protein complex II (COPII). Associates with the SCAP-SREBP complex; association is mediated via its interaction with SCAP and only takes place in the presence of sterols.

Its subcellular location is the endoplasmic reticulum membrane. Its function is as follows. Oxysterol-binding protein that mediates feedback control of cholesterol synthesis by controlling both endoplasmic reticulum to Golgi transport of SCAP and degradation of HMGCR. Acts as a negative regulator of cholesterol biosynthesis by mediating the retention of the SCAP-SREBP complex in the endoplasmic reticulum, thereby blocking the processing of sterol regulatory element-binding proteins (SREBPs). Binds oxysterol, including 22-hydroxycholesterol, 24-hydroxycholesterol, 25-hydroxycholesterol and 27-hydroxycholesterol, regulating interaction with SCAP and retention of the SCAP-SREBP complex in the endoplasmic reticulum. In presence of oxysterol, interacts with SCAP, retaining the SCAP-SREBP complex in the endoplasmic reticulum, thereby preventing SCAP from escorting SREBPs to the Golgi. Sterol deprivation reduces oxysterol-binding, disrupting the interaction between INSIG2 and SCAP, thereby promoting Golgi transport of the SCAP-SREBP complex, followed by processing and nuclear translocation of SREBPs. Also regulates cholesterol synthesis by regulating degradation of HMGCR. This is Insulin-induced gene 2 protein from Gallus gallus (Chicken).